The following is a 236-amino-acid chain: uncharacterized protein (236 aa).

The disordered stretch occupies residues 217-236 (GESPDNVVRGEGGFGSTGGH). Residues 226–236 (GEGGFGSTGGH) show a composition bias toward gly residues.

This is an uncharacterized protein from Ostreid herpesvirus 1 (isolate France) (OsHV-1).